We begin with the raw amino-acid sequence, 237 residues long: Uridylate kinase (237 aa).

10-13 (KFSG) contributes to the ATP binding site. Residues 18–23 (GDSGFG) are involved in allosteric activation by GTP. Position 52 (Gly52) interacts with UMP. Residues Gly53 and Arg57 each coordinate ATP. UMP contacts are provided by residues Asp73 and 134–141 (TGNPFFTT). ATP contacts are provided by Thr161, Tyr167, and Asp170.

The protein belongs to the UMP kinase family. In terms of assembly, homohexamer.

It localises to the cytoplasm. The catalysed reaction is UMP + ATP = UDP + ADP. It functions in the pathway pyrimidine metabolism; CTP biosynthesis via de novo pathway; UDP from UMP (UMPK route): step 1/1. Its activity is regulated as follows. Allosterically activated by GTP. Inhibited by UTP. Functionally, catalyzes the reversible phosphorylation of UMP to UDP. The chain is Uridylate kinase from Campylobacter hominis (strain ATCC BAA-381 / DSM 21671 / CCUG 45161 / LMG 19568 / NCTC 13146 / CH001A).